The sequence spans 24 residues: Ranatuerin-4 (24 aa).

Cysteine 18 and cysteine 24 are disulfide-bonded.

The protein belongs to the frog skin active peptide (FSAP) family. Ranatuerin subfamily. In terms of tissue distribution, expressed by the skin glands.

It is found in the secreted. Functionally, antibacterial activity against Gram-positive bacterium S.aureus (MIC=55 uM). Shows no detectable hemolytic activity towards human erythrocytes. The protein is Ranatuerin-4 of Aquarana catesbeiana (American bullfrog).